The following is a 216-amino-acid chain: Large ribosomal subunit protein uL3 (216 aa).

Q157 bears the N5-methylglutamine mark.

It belongs to the universal ribosomal protein uL3 family. As to quaternary structure, part of the 50S ribosomal subunit. Forms a cluster with proteins L14 and L19. Post-translationally, methylated by PrmB.

Its function is as follows. One of the primary rRNA binding proteins, it binds directly near the 3'-end of the 23S rRNA, where it nucleates assembly of the 50S subunit. The protein is Large ribosomal subunit protein uL3 of Xanthomonas axonopodis pv. citri (strain 306).